Here is a 259-residue protein sequence, read N- to C-terminus: Proteasome subunit alpha (259 aa).

Over residues 233 to 243 the composition is skewed to low complexity; that stretch reads PAAPAAASESA. The disordered stretch occupies residues 233-259; the sequence is PAAPAAASESAPEPKPDTETKPADPQD. Basic and acidic residues predominate over residues 244 to 259; sequence PEPKPDTETKPADPQD.

The protein belongs to the peptidase T1A family. In terms of assembly, the 20S proteasome core is composed of 14 alpha and 14 beta subunits that assemble into four stacked heptameric rings, resulting in a barrel-shaped structure. The two inner rings, each composed of seven catalytic beta subunits, are sandwiched by two outer rings, each composed of seven alpha subunits. The catalytic chamber with the active sites is on the inside of the barrel. Has a gated structure, the ends of the cylinder being occluded by the N-termini of the alpha-subunits. Is capped by the proteasome-associated ATPase, ARC.

The protein localises to the cytoplasm. The protein operates within protein degradation; proteasomal Pup-dependent pathway. The formation of the proteasomal ATPase ARC-20S proteasome complex, likely via the docking of the C-termini of ARC into the intersubunit pockets in the alpha-rings, may trigger opening of the gate for substrate entry. Interconversion between the open-gate and close-gate conformations leads to a dynamic regulation of the 20S proteasome proteolysis activity. Functionally, component of the proteasome core, a large protease complex with broad specificity involved in protein degradation. The sequence is that of Proteasome subunit alpha from Rhodococcus opacus (strain B4).